Consider the following 88-residue polypeptide: UPF0297 protein SAK_2030 (88 aa).

Belongs to the UPF0297 family.

This chain is UPF0297 protein SAK_2030, found in Streptococcus agalactiae serotype Ia (strain ATCC 27591 / A909 / CDC SS700).